The primary structure comprises 585 residues: Glutamate decarboxylase 2 (585 aa).

The segment at 1 to 24 (MASPGSGFWSFGSEDGSGDPENSG) is disordered. Phosphoserine occurs at positions 3, 6, 10, and 13. Residues Cys30 and Cys45 are each lipidated (S-palmitoyl cysteine). Position 181–183 (181–183 (QLS)) interacts with substrate. The residue at position 396 (Lys396) is an N6-(pyridoxal phosphate)lysine. Arg558 contributes to the substrate binding site.

It belongs to the group II decarboxylase family. Homodimer. Pyridoxal 5'-phosphate serves as cofactor. Phosphorylated; which does not affect kinetic parameters or subcellular location. In terms of processing, palmitoylated; which is required for presynaptic clustering.

It localises to the cytoplasm. The protein resides in the cytosol. The protein localises to the cytoplasmic vesicle. It is found in the presynaptic cell membrane. Its subcellular location is the golgi apparatus membrane. The enzyme catalyses L-glutamate + H(+) = 4-aminobutanoate + CO2. Its function is as follows. Catalyzes the production of GABA. This Sus scrofa (Pig) protein is Glutamate decarboxylase 2 (GAD2).